We begin with the raw amino-acid sequence, 37 residues long: Cytochrome b6-f complex subunit 7 (37 aa).

Residues 11–29 (AVILMVLVLFGLAWGFLIL) form a helical membrane-spanning segment.

Belongs to the PetM family. In terms of assembly, the 4 large subunits of the cytochrome b6-f complex are cytochrome b6, subunit IV (17 kDa polypeptide, PetD), cytochrome f and the Rieske protein, while the 4 small subunits are PetG, PetL, PetM and PetN. The complex functions as a dimer.

The protein resides in the cellular thylakoid membrane. Its function is as follows. Component of the cytochrome b6-f complex, which mediates electron transfer between photosystem II (PSII) and photosystem I (PSI), cyclic electron flow around PSI, and state transitions. The sequence is that of Cytochrome b6-f complex subunit 7 from Crocosphaera subtropica (strain ATCC 51142 / BH68) (Cyanothece sp. (strain ATCC 51142)).